Here is a 419-residue protein sequence, read N- to C-terminus: Serine hydroxymethyltransferase (419 aa).

(6S)-5,6,7,8-tetrahydrofolate contacts are provided by residues leucine 118 and 122-124 (GHL). The residue at position 227 (lysine 227) is an N6-(pyridoxal phosphate)lysine.

It belongs to the SHMT family. In terms of assembly, homodimer. Pyridoxal 5'-phosphate is required as a cofactor.

The protein resides in the cytoplasm. The catalysed reaction is (6R)-5,10-methylene-5,6,7,8-tetrahydrofolate + glycine + H2O = (6S)-5,6,7,8-tetrahydrofolate + L-serine. The protein operates within one-carbon metabolism; tetrahydrofolate interconversion. It participates in amino-acid biosynthesis; glycine biosynthesis; glycine from L-serine: step 1/1. Its function is as follows. Catalyzes the reversible interconversion of serine and glycine with tetrahydrofolate (THF) serving as the one-carbon carrier. This reaction serves as the major source of one-carbon groups required for the biosynthesis of purines, thymidylate, methionine, and other important biomolecules. Also exhibits THF-independent aldolase activity toward beta-hydroxyamino acids, producing glycine and aldehydes, via a retro-aldol mechanism. The polypeptide is Serine hydroxymethyltransferase (Chloroflexus aurantiacus (strain ATCC 29364 / DSM 637 / Y-400-fl)).